An 881-amino-acid polypeptide reads, in one-letter code: DNA mismatch repair protein MutS (881 aa).

ATP is bound at residue 612–619; sequence GPNMAGKS.

The protein belongs to the DNA mismatch repair MutS family.

Functionally, this protein is involved in the repair of mismatches in DNA. It is possible that it carries out the mismatch recognition step. This protein has a weak ATPase activity. This Clostridium tetani (strain Massachusetts / E88) protein is DNA mismatch repair protein MutS.